The primary structure comprises 173 residues: MSLKEFADALPDYAKDIRLNVGSLLGDQTLTEQRKYGLLLACAHGSGYKPIVEATEAEVAGKLSPEAANAARAAAAVMAMNNVYYRFVHLASNKEYGQMPAKLRMNVIGSPGIEKDDFELFSLAVSAMNGCGLCIDSHEKVLRQHGVAADVIQTAARVGAVIKAAATVHATAV.

The active-site Proton donor is C131. A disulfide bridge connects residues C131 and C134. The active-site Cysteine sulfenic acid (-SOH) intermediate is the C134.

Belongs to the AhpD family.

It catalyses the reaction N(6)-[(R)-dihydrolipoyl]-L-lysyl-[lipoyl-carrier protein] + a hydroperoxide = N(6)-[(R)-lipoyl]-L-lysyl-[lipoyl-carrier protein] + an alcohol + H2O. In terms of biological role, antioxidant protein with alkyl hydroperoxidase activity. Required for the reduction of the AhpC active site cysteine residues and for the regeneration of the AhpC enzyme activity. The protein is Alkyl hydroperoxide reductase AhpD of Rhizorhabdus wittichii (strain DSM 6014 / CCUG 31198 / JCM 15750 / NBRC 105917 / EY 4224 / RW1) (Sphingomonas wittichii).